The sequence spans 242 residues: Mannosyl-3-phosphoglycerate phosphatase (242 aa).

Asp-8 serves as the catalytic Nucleophile. Residues Asp-8, Asp-10, Ser-169, and Asp-204 each contribute to the Mg(2+) site.

It belongs to the HAD-like hydrolase superfamily. MPGP family. Mg(2+) serves as cofactor.

It localises to the cytoplasm. It catalyses the reaction 2-O-(alpha-D-mannosyl)-3-phosphoglycerate + H2O = (2R)-2-O-(alpha-D-mannosyl)-glycerate + phosphate. Its pathway is carbohydrate biosynthesis; 2-(alpha-D-mannosyl)-D-glycerate biosynthesis; 2-(alpha-D-mannosyl)-D-glycerate from GDP-alpha-D-mannose (MPG route): step 2/2. Hydrolyzes mannosyl-3-phosphoglycerate (MPG) to form the osmolyte mannosylglycerate (MG). The sequence is that of Mannosyl-3-phosphoglycerate phosphatase from Pyrococcus furiosus (strain ATCC 43587 / DSM 3638 / JCM 8422 / Vc1).